The following is a 198-amino-acid chain: Dual specificity protein phosphatase 13B (198 aa).

In terms of domain architecture, Tyrosine-protein phosphatase spans 45–193 (HINEVWPNLF…LQVLDNRLRR (149 aa)). Cys138 serves as the catalytic Phosphocysteine intermediate.

The protein belongs to the protein-tyrosine phosphatase family. Non-receptor class dual specificity subfamily. As to expression, most abundantly expressed in the testis.

It catalyses the reaction O-phospho-L-tyrosyl-[protein] + H2O = L-tyrosyl-[protein] + phosphate. The enzyme catalyses O-phospho-L-seryl-[protein] + H2O = L-seryl-[protein] + phosphate. The catalysed reaction is O-phospho-L-threonyl-[protein] + H2O = L-threonyl-[protein] + phosphate. Dual specificity phosphatase that dephosphorylates MAPK8/JNK and MAPK14/p38, but not MAPK1/ERK2, in vitro. Exhibits intrinsic phosphatase activity towards both phospho-seryl/threonyl and -tyrosyl residues, with similar specific activities in vitro. The polypeptide is Dual specificity protein phosphatase 13B (Mus musculus (Mouse)).